Reading from the N-terminus, the 465-residue chain is Cysteine--tRNA ligase (465 aa).

Cys-30 contacts Zn(2+). Positions 32–42 match the 'HIGH' region motif; sequence ITVYDYCHIGH. Residues Cys-214, His-239, and Glu-243 each coordinate Zn(2+). A 'KMSKS' region motif is present at residues 271–275; sequence KMSKS. An ATP-binding site is contributed by Lys-274.

This sequence belongs to the class-I aminoacyl-tRNA synthetase family. In terms of assembly, monomer. It depends on Zn(2+) as a cofactor.

The protein localises to the cytoplasm. The enzyme catalyses tRNA(Cys) + L-cysteine + ATP = L-cysteinyl-tRNA(Cys) + AMP + diphosphate. The polypeptide is Cysteine--tRNA ligase (Burkholderia mallei (strain NCTC 10229)).